A 290-amino-acid chain; its full sequence is GTPase Era (290 aa).

Residues 2-168 (KVCIISILGR…IEILKEYAYN (167 aa)) form the Era-type G domain. Residues 10 to 17 (GRPNVGKS) form a G1 region. GTP is bound at residue 10 to 17 (GRPNVGKS). The G2 stretch occupies residues 36-40 (QTTRD). Positions 57–60 (DTPG) are G3. Residues 57 to 61 (DTPGI) and 118 to 121 (SKID) each bind GTP. Residues 118–121 (SKID) form a G4 region. A G5 region spans residues 147-149 (VSN). The KH type-2 domain maps to 199-275 (LTDELPHSIA…TLNLKVKVSN (77 aa)).

It belongs to the TRAFAC class TrmE-Era-EngA-EngB-Septin-like GTPase superfamily. Era GTPase family. Monomer.

It is found in the cytoplasm. It localises to the cell membrane. An essential GTPase that binds both GDP and GTP, with rapid nucleotide exchange. Plays a role in 16S rRNA processing and 30S ribosomal subunit biogenesis and possibly also in cell cycle regulation and energy metabolism. This is GTPase Era from Mycoplasmopsis agalactiae (strain NCTC 10123 / CIP 59.7 / PG2) (Mycoplasma agalactiae).